The chain runs to 345 residues: D-amino-acid oxidase (345 aa).

FAD contacts are provided by serine 10, isoleucine 13, serine 49, glycine 53, and asparagine 55. The (R)-lactate site is built by tyrosine 230 and arginine 290. Anthranilate-binding residues include tyrosine 230 and arginine 290. Residues arginine 290, serine 317, glycine 320, tyrosine 321, and glutamine 322 each coordinate FAD. The Microbody targeting signal signature appears at 343–345; sequence AKL.

Belongs to the DAMOX/DASOX family. Requires FAD as cofactor.

It is found in the peroxisome matrix. It carries out the reaction a D-alpha-amino acid + O2 + H2O = a 2-oxocarboxylate + H2O2 + NH4(+). It catalyses the reaction D-methionine + O2 + H2O = 4-methylsulfanyl-2-oxobutanoate + H2O2 + NH4(+). Functionally, catalyzes the oxidative deamination of D-amino acids with broad substrate specificity. Enables the organism to utilize D-amino acids as a source of nutrients. Enables the organism to utilize D-alanine as a nitrogen source, although it is not strictly required for this process. Also enables utilization of D-alanine as a carbon source. This Candida boidinii (Yeast) protein is D-amino-acid oxidase.